Here is a 151-residue protein sequence, read N- to C-terminus: Small ribosomal subunit protein uS15 (151 aa).

The segment covering 1–16 (MPHRSRHKKGRSRSVR) has biased composition (basic residues). Positions 1–21 (MPHRSRHKKGRSRSVRPAHPT) are disordered.

The protein belongs to the universal ribosomal protein uS15 family. In terms of assembly, part of the 30S ribosomal subunit.

The sequence is that of Small ribosomal subunit protein uS15 from Pyrobaculum islandicum (strain DSM 4184 / JCM 9189 / GEO3).